We begin with the raw amino-acid sequence, 209 residues long: Abscisic acid receptor PYL5 (209 aa).

The segment at 44 to 196 (HAPGEHQCSS…NLTSLAEVSE (153 aa)) is START-like. C51 and C177 form a disulfide bridge. Abscisate is bound by residues K80, 109–114 (ATTSTE), 136–142 (RLRNYSS), and E161. A Gate loop motif is present at residues 105–109 (TGLPA). Residues 135-137 (HRL) carry the Latch loop motif.

It belongs to the PYR/PYL/RCAR abscisic acid intracellular receptor family. As to quaternary structure, monomer. Interacts with PP2C30. Binding to PP2C30 is dependent on the presence of abscisic acid (ABA). Interacts with PP2C51. Binding to PP2C51 is dependent on the presence of ABA. Interacts with PP2C50. Binding to PP2C50 is dependent on the presence of ABA. Interacts with PP2C53. In terms of tissue distribution, expressed in leaf sheaths and leaf blades. Expressed at low levels in roots, flowers and seeds.

It localises to the nucleus. Its subcellular location is the cytoplasm. The protein localises to the cytosol. Intracellular abscisic acid (ABA) receptor that functions as a positive regulator of ABA signaling pathway. Together with ABI5, PP2C30 and SAPK2, is part of an ABA signaling unit that modulates seed germination and early seedling growth. Acts as a positive regulator of abiotic stress-responsive gene expression. Inhibits the protein phosphatases PP2C06 and PP2C09 when activated by ABA. This chain is Abscisic acid receptor PYL5, found in Oryza sativa subsp. japonica (Rice).